We begin with the raw amino-acid sequence, 616 residues long: Chaperone protein HtpG (616 aa).

The a; substrate-binding stretch occupies residues 1–333; it reads MKKQFDTEVN…CQDLPLNVSR (333 aa). The tract at residues 334–542 is b; that stretch reads EILQQNKILS…SNDPTYQMQK (209 aa). The tract at residues 543 to 616 is c; that stretch reads IMLSMGQEVK…INEFLEKELL (74 aa).

The protein belongs to the heat shock protein 90 family. Homodimer.

The protein resides in the cytoplasm. In terms of biological role, molecular chaperone. Has ATPase activity. The protein is Chaperone protein HtpG of Borrelia garinii subsp. bavariensis (strain ATCC BAA-2496 / DSM 23469 / PBi) (Borreliella bavariensis).